The following is a 459-amino-acid chain: uncharacterized protein (459 aa).

The disordered stretch occupies residues 28 to 47 (AHDEELTGPPQKPAYAAKPA). In terms of domain architecture, FAD-binding PCMH-type spans 35 to 214 (GPPQKPAYAA…TEVIVKLHPR (180 aa)).

It belongs to the oxygen-dependent FAD-linked oxidoreductase family. Requires FAD as cofactor.

This is an uncharacterized protein from Mycobacterium tuberculosis (strain CDC 1551 / Oshkosh).